Reading from the N-terminus, the 392-residue chain is GTPase Obg (392 aa).

Positions 1–159 constitute an Obg domain; the sequence is MKFIDEALIR…RDLQLELMLL (159 aa). Residues 160–333 form the OBG-type G domain; sequence ADVGMLGLPN…LCRDIMDFIE (174 aa). GTP-binding positions include 166-173, 191-195, 213-216, 283-286, and 314-316; these read GLPNAGKS, FTTLV, DIPG, NKID, and SAA. Ser173 and Thr193 together coordinate Mg(2+). A disordered region spans residues 361 to 392; the sequence is SEQVFTEDDQEEDDWDDWSEDDEEGVEIIYKP. Acidic residues predominate over residues 365–386; sequence FTEDDQEEDDWDDWSEDDEEGV.

This sequence belongs to the TRAFAC class OBG-HflX-like GTPase superfamily. OBG GTPase family. Monomer. The cofactor is Mg(2+).

Its subcellular location is the cytoplasm. Functionally, an essential GTPase which binds GTP, GDP and possibly (p)ppGpp with moderate affinity, with high nucleotide exchange rates and a fairly low GTP hydrolysis rate. Plays a role in control of the cell cycle, stress response, ribosome biogenesis and in those bacteria that undergo differentiation, in morphogenesis control. This chain is GTPase Obg, found in Histophilus somni (strain 2336) (Haemophilus somnus).